The chain runs to 479 residues: Ribosomal RNA small subunit methyltransferase F (479 aa).

Residues 125 to 131, Glu-149, Asp-176, and Asp-194 contribute to the S-adenosyl-L-methionine site; that span reads AAAPGSK. The Nucleophile role is filled by Cys-247.

The protein belongs to the class I-like SAM-binding methyltransferase superfamily. RsmB/NOP family.

It localises to the cytoplasm. It carries out the reaction cytidine(1407) in 16S rRNA + S-adenosyl-L-methionine = 5-methylcytidine(1407) in 16S rRNA + S-adenosyl-L-homocysteine + H(+). Specifically methylates the cytosine at position 1407 (m5C1407) of 16S rRNA. In Escherichia coli O157:H7 (strain EC4115 / EHEC), this protein is Ribosomal RNA small subunit methyltransferase F.